The primary structure comprises 635 residues: 1-deoxy-D-xylulose-5-phosphate synthase (635 aa).

Residues histidine 79 and 120-122 (GHS) contribute to the thiamine diphosphate site. A Mg(2+)-binding site is contributed by aspartate 151. Thiamine diphosphate contacts are provided by residues 152–153 (GA), asparagine 182, tyrosine 290, and glutamate 372. Asparagine 182 provides a ligand contact to Mg(2+).

This sequence belongs to the transketolase family. DXPS subfamily. In terms of assembly, homodimer. Requires Mg(2+) as cofactor. The cofactor is thiamine diphosphate.

It catalyses the reaction D-glyceraldehyde 3-phosphate + pyruvate + H(+) = 1-deoxy-D-xylulose 5-phosphate + CO2. The protein operates within metabolic intermediate biosynthesis; 1-deoxy-D-xylulose 5-phosphate biosynthesis; 1-deoxy-D-xylulose 5-phosphate from D-glyceraldehyde 3-phosphate and pyruvate: step 1/1. Catalyzes the acyloin condensation reaction between C atoms 2 and 3 of pyruvate and glyceraldehyde 3-phosphate to yield 1-deoxy-D-xylulose-5-phosphate (DXP). This chain is 1-deoxy-D-xylulose-5-phosphate synthase, found in Stenotrophomonas maltophilia (strain K279a).